The primary structure comprises 702 residues: Cytolytic toxin-beta (702 aa).

Residues 2-264 are structural MACPF/CDC pore-forming domain; sequence PSDILVVAAL…EAPQLMADSS (263 aa). 3 N-linked (GlcNAc...) asparagine glycosylation sites follow: Asn-94, Asn-101, and Asn-286. The segment at 265-387 is structural FAT domain; that stretch reads TPILRKVRNT…DIIEEAKHKV (123 aa). Residues 388–515 are thioredoxin (THX) domain; the sequence is VLSKSQMARE…PRIPPVETIQ (128 aa). The B30.2/SPRY domain maps to 504–702; sequence SNPRIPPVET…ANGQIKLKGE (199 aa).

Belongs to the SNTX/VTX toxin family. As to quaternary structure, heterodimer of alpha and beta subunits; non-covalently linked. Also associates into tetramers or even higher aggregates. In terms of processing, intrachain disulfide bonds may be present in the heterodimer. Expressed by the venom gland.

It is found in the secreted. In terms of biological role, this heterodimer induces potent hemolytic activities (when tested on rabbit erythrocytes, EC(50)=25-56 ng/mL) due to its ability to form pores in the cell membrane. The pore may be composed of 10 alpha/beta heterodimers. The toxin shows cardiovascular effects that include a vasorelaxant action that may involve the L-arginine-nitric oxid synthase pathway. In addition, it displays edema-inducing activities, increases vascular permeability. It also shows myotoxic activities and interferes irreversibly with neuromuscular function. It also induces irreversible platelet aggregation in rabbit or rat (but not in human or mouse) whole blood. In addition, it has been observed to increase spontaneous quantal acetylcholine release from isolated frog cutaneous pectoris motor endings. The chain is Cytolytic toxin-beta from Scorpaena plumieri (Spotted scorpionfish).